The following is a 110-amino-acid chain: uncharacterized protein (110 aa).

The tract at residues 86–110 (SEEIDEPVMKKRHRRKGSPHRAPFF) is disordered. The span at 95–104 (KKRHRRKGSP) shows a compositional bias: basic residues.

This is an uncharacterized protein from Arabidopsis thaliana (Mouse-ear cress).